The chain runs to 226 residues: GTP-binding nuclear protein Ran-3 (226 aa).

The Small GTPase Ran-type domain occupies 14-178 (GYPSFKLILV…LYLARKLTGD (165 aa)). Residue 25–32 (DGGTGKTT) participates in GTP binding. The segment at 44 to 52 (KRYEPTIGV) is switch-I. Residues Gly75, 129–132 (NKVD), and 157–159 (SAK) contribute to the GTP site. The switch-II stretch occupies residues 75 to 91 (GQEKFGGLRDGYYIHGH).

This sequence belongs to the small GTPase superfamily. Ran family. In terms of assembly, found in a nuclear export complex with RanGTP, exportin and pre-miRNA.

It is found in the nucleus. GTP-binding protein involved in nucleocytoplasmic transport. Required for the import of protein into the nucleus and also for RNA export. Involved in chromatin condensation and control of cell cycle. This Oryza sativa subsp. indica (Rice) protein is GTP-binding nuclear protein Ran-3 (RAN3).